We begin with the raw amino-acid sequence, 214 residues long: Stringent starvation protein A homolog (214 aa).

The GST N-terminal domain occupies 9–87 (SVMSLFSDKN…YLDERFPHPP (79 aa)). The 118-residue stretch at 92–209 (YPVLRGKSRL…SIGGSAPKHL (118 aa)) folds into the GST C-terminal domain.

The protein belongs to the GST superfamily. HSP26 family.

In terms of biological role, forms an equimolar complex with the RNA polymerase holoenzyme (RNAP) but not with the core enzyme. The protein is Stringent starvation protein A homolog (sspA) of Haemophilus ducreyi (strain 35000HP / ATCC 700724).